Consider the following 805-residue polypeptide: Arginine/serine-rich protein PNISR (805 aa).

Residues 74–88 (PNNHGNFQGDSNFNR) are compositionally biased toward polar residues. 2 disordered regions span residues 74–331 (PNNH…EEKE) and 382–805 (LTGL…SRSR). Composition is skewed to pro residues over residues 100 to 115 (PPHPPPDQPWMPPTPG) and 183 to 195 (YWQPGPPGPPAPP). The span at 197-210 (NRRERPSSFRDRQR) shows a compositional bias: basic and acidic residues. Ser-204 and Ser-211 each carry phosphoserine. Lys-218 participates in a covalent cross-link: Glycyl lysine isopeptide (Lys-Gly) (interchain with G-Cter in SUMO2). The stretch at 237–276 (REGLEKMEREKQKKLEKERMEQQRSQLSKKEKKATEDAEG) forms a coiled coil. Over residues 238 to 258 (EGLEKMEREKQKKLEKERMEQ) the composition is skewed to basic and acidic residues. 4 positions are modified to phosphoserine: Ser-290, Ser-304, Ser-313, and Ser-321. Over residues 290 to 299 (SDEEEEDTEN) the composition is skewed to acidic residues. Residues 384 to 393 (GLGGLGGYGS) show a composition bias toward gly residues. A compositionally biased stretch (basic and acidic residues) spans 421–463 (QKQEAFWRKEKEQQLLHDKQMEEEKQQTERVTKEMNEFIHKEQ). A coiled-coil region spans residues 429-461 (KEKEQQLLHDKQMEEEKQQTERVTKEMNEFIHK). Phosphoserine is present on residues Ser-465 and Ser-467. Composition is skewed to basic and acidic residues over residues 470 to 486 (EAREADGDVVNEKKRTP) and 494 to 506 (EPKKEHKEKEKQG). Thr-485 bears the Phosphothreonine mark. Lys-496 participates in a covalent cross-link: Glycyl lysine isopeptide (Lys-Gly) (interchain with G-Cter in SUMO2). Over residues 508–550 (SRSGSSSSGSSSSNSRTSSTSSTVSSSSYSSSSGSSRTSSRSS) the composition is skewed to low complexity. Basic residues-rich tracts occupy residues 551–579 (SPKRKKRHSRSRSPTIKARRSRSRSYSRR), 587–598 (ARVKIRDRRRSN), and 607–639 (RRNRSPSRERRRSRSRSRDRRTNRASRSRSRDR). Basic and acidic residues predominate over residues 659-721 (EAKEQERKKE…KRKRESERTF (63 aa)). Positions 673–703 (IDKDRKKKDKEREREQDKRKEKQKREEKDFK) form a coiled coil. Residue Lys-703 forms a Glycyl lysine isopeptide (Lys-Gly) (interchain with G-Cter in SUMO2) linkage. Phosphoserine is present on Ser-726. The segment covering 732–753 (IRHDSRQDSKKSTTKDSKKHSG) has biased composition (basic and acidic residues). The segment covering 754 to 767 (SDSSGRSSSESPGS) has biased composition (low complexity). 2 stretches are compositionally biased toward basic residues: residues 771–781 (KKAKKPKHSRS) and 789–805 (RSGKKASRKHKSKSRSR).

Belongs to the splicing factor SR family. As to quaternary structure, interacts with PNN. As to expression, expressed in heart, skeletal muscle, thymus, spleen, kidney, liver, placenta and leukocytes.

The protein localises to the nucleus speckle. The protein is Arginine/serine-rich protein PNISR (PNISR) of Homo sapiens (Human).